A 356-amino-acid chain; its full sequence is Calcium/calmodulin-dependent protein kinase type 1 (356 aa).

The Nuclear localization signal motif lies at 2–7; sequence PLFKRR. The Protein kinase domain maps to 22-278; that stretch reads YDFRDVLGTG…CQSALEHPWI (257 aa). Residues 28-36 and K52 contribute to the ATP site; that span reads LGTGAFSKV. D144 acts as the Proton acceptor in catalysis. A Phosphothreonine; by ckk-1 modification is found at T179. Residues 278 to 318 are autoinhibitory domain; that stretch reads ISGNTAYTHDIHRTVAVHLKKSLAKRNWKKAFNAAAAIRQL. Residues 298 to 319 are calmodulin-binding; that stretch reads KSLAKRNWKKAFNAAAAIRQLQ.

This sequence belongs to the protein kinase superfamily. CAMK Ser/Thr protein kinase family. CaMK subfamily. It depends on Mg(2+) as a cofactor.

It localises to the nucleus. The protein resides in the cytoplasm. It carries out the reaction L-seryl-[protein] + ATP = O-phospho-L-seryl-[protein] + ADP + H(+). It catalyses the reaction L-threonyl-[protein] + ATP = O-phospho-L-threonyl-[protein] + ADP + H(+). With respect to regulation, activated by Ca(2+)/calmodulin. Binding of calmodulin results in a conformational change that generates functional binding sites for both substrate and ATP, and thus relieves autoinhibition and lowers the Km of substrate binding. Must be phosphorylated by ckk-1 to be maximally active but this does not appear to be required for activity in AFD neurons. Calcium/calmodulin-dependent protein kinase that operates in the calcium-triggered CaMKK-CaMK1 signaling cascade which results in transcriptional activation. Transcriptional activation occurs at least in part through phosphorylation of crh-1. Regulates gene expression, sensory morphology, and function of the AFD thermosensory neurons. Involved in long-term adaptation of AFD neurons to temperatures warmer than the initial acclimatized cultivation temperature. Acts in the FLP thermal nociceptors to moderate the responsiveness to noxious heat and controls neuropeptide release from FLP neurons in response to temperature elevations. Regulates the dauer decision, the decision of the larvae to enter into the alternative stress-resistant and long-lived dauer developmental stage, based on the feeding state, primarily in the AWC sensory neurons. Acts non cell-autonomously in the AWC neurons to regulate expression of the daf-28 insulin-like peptide and cell-autonomously in the ASI sensory neurons to regulate expression of the growth promoting daf-7 in a food-regulated manner. Plays a role in memory-based thermal response of an individual AFD neuron cell. Involved in chemotaxis response in AWC neurons to attractant 2-heptanone, a volatile organic compound emitted by the nematode pathogenic bacterium B.nematocida B16. Represses transcription of glutamate receptor glr-1 in the nucleus basally and in response to change in synaptic activity. The polypeptide is Calcium/calmodulin-dependent protein kinase type 1 (cmk-1) (Caenorhabditis briggsae).